We begin with the raw amino-acid sequence, 322 residues long: Daunorubicin resistance ATP-binding protein DrrA2 (322 aa).

Positions 6-236 constitute an ABC transporter domain; that stretch reads VRAEAMEKRY…VGGDRIEVVV (231 aa). Residue 38–45 coordinates ATP; it reads GPNGAGKT.

This sequence belongs to the ABC transporter superfamily. Drug exporter-1 (DrugE1) (TC 3.A.1.105) family. As to quaternary structure, the complex is probably composed of two ATP-binding proteins (DrrA2) and two transmembrane proteins (DrrB2).

The protein localises to the cell membrane. It catalyses the reaction daunorubicin(in) + ATP + H2O = daunorubicin(out) + ADP + phosphate + H(+). Part of the ABC transporter complex DrrA2B2 involved in daunorubicin efflux. Responsible for energy coupling to the transport system. Confers self-resistance to daunorubicin, an antibiotic produced by S.coeruleorubidus. The protein is Daunorubicin resistance ATP-binding protein DrrA2 of Streptomyces coeruleorubidus.